The sequence spans 261 residues: Mlc titration factor A (261 aa).

The Zn(2+) site is built by histidine 111, histidine 148, histidine 152, and glutamate 211.

Belongs to the MtfA family. In terms of assembly, interacts with Mlc. Zn(2+) is required as a cofactor.

It localises to the cytoplasm. Its function is as follows. Involved in the modulation of the activity of the glucose-phosphotransferase system (glucose-PTS). Interacts with the transcriptional repressor Mlc, preventing its interaction with DNA and leading to the modulation of expression of genes regulated by Mlc, including ptsG, which encodes the PTS system glucose-specific EIICB component. Shows zinc-dependent metallopeptidase activity. The sequence is that of Mlc titration factor A from Edwardsiella ictaluri (strain 93-146).